The chain runs to 384 residues: MAP kinase-activated protein kinase 3 (384 aa).

Met-1 bears the N-acetylmethionine mark. The tract at residues 1-33 (MDGETAGEKGSLVPQPGALGAPALGGAPAPGVR) is disordered. The segment covering 14 to 31 (PQPGALGAPALGGAPAPG) has biased composition (low complexity). A Protein kinase domain is found at 46 to 306 (QLSKQVLGLG…IMQFMNHPWI (261 aa)). Residues 52-60 (LGLGVNGKV) and Lys-75 each bind ATP. The active-site Proton acceptor is Asp-168. The residue at position 203 (Thr-203) is a Phosphothreonine; by MAPK14. At Ser-253 the chain carries Phosphoserine; by MAPK14. Ser-309 carries the phosphoserine; by autocatalysis modification. The interval 309–345 (SMEVPQTPLHTARVLEEDKDHWDDVKEEMTSALATMR) is autoinhibitory helix. A Phosphothreonine; by MAPK14 modification is found at Thr-315. The Nuclear export signal (NES) signature appears at 337–346 (MTSALATMRV). The segment at 347-371 (DYDQVKIKDLKTSNNRLLNKRRKKQ) is p38 MAPK-binding site. 2 consecutive short sequence motifs (bipartite nuclear localization signal) follow at residues 352 to 355 (KIKD) and 366 to 370 (KRRKK). The segment at 359-384 (SNNRLLNKRRKKQGGSSSASPGCNNQ) is disordered. Polar residues predominate over residues 372-384 (GGSSSASPGCNNQ).

This sequence belongs to the protein kinase superfamily. CAMK Ser/Thr protein kinase family. As to quaternary structure, heterodimer with p38-alpha/MAPK14. The heterodimer with p38-alpha/MAPK14 forms a stable complex: molecules are positioned 'face to face' so that the ATP-binding sites of both kinases are at the heterodimer interface. Interacts with TCF3 and with polycomb proteins, such as PCH2 and BMI1/PCGF4. In terms of processing, phosphorylated and activated by MAPK1/ERK2 and MAPK3/ERK1. Phosphorylated and activated by MAP kinase p38-alpha/MAPK14 at Thr-203, Ser-253 and Thr-315.

The protein resides in the nucleus. It localises to the cytoplasm. It catalyses the reaction L-seryl-[protein] + ATP = O-phospho-L-seryl-[protein] + ADP + H(+). The enzyme catalyses L-threonyl-[protein] + ATP = O-phospho-L-threonyl-[protein] + ADP + H(+). With respect to regulation, activated following phosphorylation by p38-alpha/MAPK14 following various stresses. Inhibited by ligand 5B (2'-[2-(1,3-benzodioxol-5-yl)pyrimidin-4-yl]-5',6'-dihydrospiro[piperidine-4,7'-pyrrolo[3,2-c]pyridin]- 4'(1'h)-one) and ligand P4O (2-[2-(2-fluorophenyl)pyridin-4-yl]-1,5,6,7-tetrahydro- 4h-pyrrolo[3,2-c]pyridin-4-one), 2 ATP-competitive inhibitors. In terms of biological role, stress-activated serine/threonine-protein kinase involved in cytokines production, endocytosis, cell migration, chromatin remodeling and transcriptional regulation. Following stress, it is phosphorylated and activated by MAP kinase p38-alpha/MAPK14, leading to phosphorylation of substrates. Phosphorylates serine in the peptide sequence, Hyd-X-R-X(2)-S, where Hyd is a large hydrophobic residue. MAPKAPK2 and MAPKAPK3, share the same function and substrate specificity, but MAPKAPK3 kinase activity and level in protein expression are lower compared to MAPKAPK2. Phosphorylates HSP27/HSPB1, KRT18, KRT20, RCSD1, RPS6KA3, TAB3 and TTP/ZFP36. Mediates phosphorylation of HSP27/HSPB1 in response to stress, leading to dissociate HSP27/HSPB1 from large small heat-shock protein (sHsps) oligomers and impair their chaperone activities and ability to protect against oxidative stress effectively. Involved in inflammatory response by regulating tumor necrosis factor (TNF) and IL6 production post-transcriptionally: acts by phosphorylating AU-rich elements (AREs)-binding proteins, such as TTP/ZFP36, leading to regulate the stability and translation of TNF and IL6 mRNAs. Phosphorylation of TTP/ZFP36, a major post-transcriptional regulator of TNF, promotes its binding to 14-3-3 proteins and reduces its ARE mRNA affinity leading to inhibition of dependent degradation of ARE-containing transcript. Involved in toll-like receptor signaling pathway (TLR) in dendritic cells: required for acute TLR-induced macropinocytosis by phosphorylating and activating RPS6KA3. Also acts as a modulator of Polycomb-mediated repression. This Rattus norvegicus (Rat) protein is MAP kinase-activated protein kinase 3 (Mapkapk3).